Consider the following 401-residue polypeptide: MAHMNPTPVLEAGQDKTMVLNMGPQHPSTHGVLRLLLEIDGETIVRIMPDIGYLHTGIEKTCEAKFYQQVVPMTDRIDYLCPMTNNLAYVLAVEKLLGLEIPERAQWIRVLCNELTRINSHLVWLGTGAMDLGAMTVFLYCFREREELLKLFEAVAGQRMMTSYFRVGGVSLEPPLGWFDRVKKFADTFPSKMDEYEGLLTQNPIFVMRTKGVAKITKEDALALGASGPTLRGSGIDFDLRRDMPYSGYDKFKFNVPVKTEGDVYARYQCRIAELRESCKIVQQALAGMPEGSIKADAPKVVLPDREKMKTQMESLIYHFKIVTEGFTVPPGEVYSAIESPRGEMGYYIVSDGTAKPYRVHMRSPSFANLQMLPSMCTGQLLADVVAAIGSIDIVLGDCDR.

This sequence belongs to the complex I 49 kDa subunit family. In terms of assembly, NDH-1 is composed of 14 different subunits. Subunits NuoB, C, D, E, F, and G constitute the peripheral sector of the complex.

It localises to the cell inner membrane. It carries out the reaction a quinone + NADH + 5 H(+)(in) = a quinol + NAD(+) + 4 H(+)(out). In terms of biological role, NDH-1 shuttles electrons from NADH, via FMN and iron-sulfur (Fe-S) centers, to quinones in the respiratory chain. The immediate electron acceptor for the enzyme in this species is believed to be ubiquinone. Couples the redox reaction to proton translocation (for every two electrons transferred, four hydrogen ions are translocated across the cytoplasmic membrane), and thus conserves the redox energy in a proton gradient. This is NADH-quinone oxidoreductase subunit D 2 from Koribacter versatilis (strain Ellin345).